A 628-amino-acid chain; its full sequence is tRNA 5-methylaminomethyl-2-thiouridine biosynthesis bifunctional protein MnmC (628 aa).

The interval 1–237 is tRNA (mnm(5)s(2)U34)-methyltransferase; it reads MSSYSPLVPP…KWHMTVGVRE (237 aa). The FAD-dependent cmnm(5)s(2)U34 oxidoreductase stretch occupies residues 265–628; that stretch reads VGGGLAGAGI…ADLLAAVAPR (364 aa).

This sequence in the N-terminal section; belongs to the methyltransferase superfamily. tRNA (mnm(5)s(2)U34)-methyltransferase family. In the C-terminal section; belongs to the DAO family. FAD serves as cofactor.

It is found in the cytoplasm. The catalysed reaction is 5-aminomethyl-2-thiouridine(34) in tRNA + S-adenosyl-L-methionine = 5-methylaminomethyl-2-thiouridine(34) in tRNA + S-adenosyl-L-homocysteine + H(+). Its function is as follows. Catalyzes the last two steps in the biosynthesis of 5-methylaminomethyl-2-thiouridine (mnm(5)s(2)U) at the wobble position (U34) in tRNA. Catalyzes the FAD-dependent demodification of cmnm(5)s(2)U34 to nm(5)s(2)U34, followed by the transfer of a methyl group from S-adenosyl-L-methionine to nm(5)s(2)U34, to form mnm(5)s(2)U34. The sequence is that of tRNA 5-methylaminomethyl-2-thiouridine biosynthesis bifunctional protein MnmC from Bordetella petrii (strain ATCC BAA-461 / DSM 12804 / CCUG 43448).